A 490-amino-acid polypeptide reads, in one-letter code: MDPFVVLVLCLSFVLLFSLWRQSSGRRKLPPGPTPLPIIGNILQIDVKDICKSFSNFSKVYGPVFTVYFGMNPVVVLHGYETVKEALIDNAEEFSGRGILPISERITNGLGIISSNGKRWKETRRFSLTTLRNFGMGKRSIEDRVQEEARCLVEELRKTKASPCDPTFILGCAPCNVICSVVFQKRFDYKDENFLTLIKRFTVNFRILTSPWIQVCNNFPLLIDCFPGTHNKLLKNVALTKSYIREKVKEHQATLDVNNPRDFIDCFLIKMEQEKDNQQSEFTIENLVGTVADLFVAGTETTSTTLRYGLLLLLKHPEVTAKVQEEIDHVIGRHRSPCMQDRSHMPYTDAVIHEIQRYIDLVPTGVPHAVTTDIKFRNYLIPKGTIIITLLTSVLHDDKEFPNPKIFDPGHFLDENGNFKKSDYFMPFSAGKRICAGEGLARMELFLFLTTILQNFNLKSVADLKNLNTTSATRGIISLPPSYQICFIPV.

Position 435 (C435) interacts with heme.

Belongs to the cytochrome P450 family. It depends on heme as a cofactor.

It localises to the endoplasmic reticulum membrane. It is found in the microsome membrane. The catalysed reaction is an organic molecule + reduced [NADPH--hemoprotein reductase] + O2 = an alcohol + oxidized [NADPH--hemoprotein reductase] + H2O + H(+). In terms of biological role, cytochromes P450 are a group of heme-thiolate monooxygenases. In liver microsomes, this enzyme is involved in an NADPH-dependent electron transport pathway. It oxidizes a variety of structurally unrelated compounds, including steroids, fatty acids, and xenobiotics. The sequence is that of Cytochrome P450 2C20 (CYP2C20) from Macaca fascicularis (Crab-eating macaque).